The sequence spans 187 residues: UPF0340 protein SP70585_0722 (187 aa).

Belongs to the UPF0340 family.

This Streptococcus pneumoniae (strain 70585) protein is UPF0340 protein SP70585_0722.